We begin with the raw amino-acid sequence, 247 residues long: Probable transcriptional regulatory protein EUBELI_00902 (247 aa).

Belongs to the TACO1 family.

It localises to the cytoplasm. The polypeptide is Probable transcriptional regulatory protein EUBELI_00902 (Lachnospira eligens (strain ATCC 27750 / DSM 3376 / VPI C15-48 / C15-B4) (Eubacterium eligens)).